Consider the following 155-residue polypeptide: Transcriptional repressor NrdR (155 aa).

A zinc finger spans residues 3–34 (CPFCGNIDTQVKDSRPAEDHVSIRRRRFCPAC). One can recognise an ATP-cone domain in the interval 49 to 139 (LVVIKSSGKR…VYKNFQAADD (91 aa)).

It belongs to the NrdR family. Requires Zn(2+) as cofactor.

Negatively regulates transcription of bacterial ribonucleotide reductase nrd genes and operons by binding to NrdR-boxes. The protein is Transcriptional repressor NrdR of Cereibacter sphaeroides (strain ATCC 17025 / ATH 2.4.3) (Rhodobacter sphaeroides).